Consider the following 282-residue polypeptide: sn-glycerol-3-phosphate transport system permease protein UgpE (282 aa).

Transmembrane regions (helical) follow at residues 14–34, 86–106, 112–132, 136–156, 201–221, and 248–268; these read LMLI…FVAS, IAIA…IVFF, MAFF…RILP, VIVD…LMAS, IAAL…WPLL, and WNYV…VVVL. The 192-residue stretch at 78 to 269 folds into the ABC transmembrane type-1 domain; the sequence is LFNTFVVAIA…IPPVAVVVLM (192 aa).

The protein belongs to the binding-protein-dependent transport system permease family. As to quaternary structure, the complex is composed of two ATP-binding proteins (UgpC), two transmembrane proteins (UgpA and UgpE) and a solute-binding protein (UgpB).

It localises to the cell inner membrane. Part of the ABC transporter complex UgpBAEC involved in sn-glycerol-3-phosphate (G3P) import. Probably responsible for the translocation of the substrate across the membrane. The polypeptide is sn-glycerol-3-phosphate transport system permease protein UgpE (ugpE) (Rhizobium meliloti (strain 1021) (Ensifer meliloti)).